The sequence spans 429 residues: Adenylosuccinate synthetase (429 aa).

GTP is bound by residues 12 to 18 and 40 to 42; these read GDEGKGK and GHT. The active-site Proton acceptor is the Asp-13. Mg(2+)-binding residues include Asp-13 and Gly-40. IMP is bound by residues 13 to 16, 38 to 41, Thr-129, Arg-143, Gln-223, Thr-238, and Arg-302; these read DEGK and NAGH. His-41 (proton donor) is an active-site residue. 298 to 304 is a binding site for substrate; it reads VVTGRKR. GTP contacts are provided by residues Arg-304, 330 to 332, and 412 to 414; these read KLD and STS.

The protein belongs to the adenylosuccinate synthetase family. Homodimer. Mg(2+) serves as cofactor.

It is found in the cytoplasm. The catalysed reaction is IMP + L-aspartate + GTP = N(6)-(1,2-dicarboxyethyl)-AMP + GDP + phosphate + 2 H(+). It functions in the pathway purine metabolism; AMP biosynthesis via de novo pathway; AMP from IMP: step 1/2. Functionally, plays an important role in the de novo pathway of purine nucleotide biosynthesis. Catalyzes the first committed step in the biosynthesis of AMP from IMP. The chain is Adenylosuccinate synthetase from Brucella suis (strain ATCC 23445 / NCTC 10510).